We begin with the raw amino-acid sequence, 376 residues long: 4-hydroxy-3-methylbut-2-en-1-yl diphosphate synthase (flavodoxin) (376 aa).

Residues C270, C273, C305, and E312 each contribute to the [4Fe-4S] cluster site.

The protein belongs to the IspG family. It depends on [4Fe-4S] cluster as a cofactor.

It carries out the reaction (2E)-4-hydroxy-3-methylbut-2-enyl diphosphate + oxidized [flavodoxin] + H2O + 2 H(+) = 2-C-methyl-D-erythritol 2,4-cyclic diphosphate + reduced [flavodoxin]. It participates in isoprenoid biosynthesis; isopentenyl diphosphate biosynthesis via DXP pathway; isopentenyl diphosphate from 1-deoxy-D-xylulose 5-phosphate: step 5/6. Functionally, converts 2C-methyl-D-erythritol 2,4-cyclodiphosphate (ME-2,4cPP) into 1-hydroxy-2-methyl-2-(E)-butenyl 4-diphosphate. The sequence is that of 4-hydroxy-3-methylbut-2-en-1-yl diphosphate synthase (flavodoxin) from Colwellia psychrerythraea (strain 34H / ATCC BAA-681) (Vibrio psychroerythus).